The sequence spans 239 residues: Ribosomal RNA small subunit methyltransferase A (239 aa).

S-adenosyl-L-methionine-binding residues include Asn-23, Ile-25, Gly-50, Glu-72, Asp-97, and Asn-116.

It belongs to the class I-like SAM-binding methyltransferase superfamily. rRNA adenine N(6)-methyltransferase family. RsmA subfamily.

It is found in the cytoplasm. It catalyses the reaction adenosine(1518)/adenosine(1519) in 16S rRNA + 4 S-adenosyl-L-methionine = N(6)-dimethyladenosine(1518)/N(6)-dimethyladenosine(1519) in 16S rRNA + 4 S-adenosyl-L-homocysteine + 4 H(+). Specifically dimethylates two adjacent adenosines (A1518 and A1519) in the loop of a conserved hairpin near the 3'-end of 16S rRNA in the 30S particle. May play a critical role in biogenesis of 30S subunits. The chain is Ribosomal RNA small subunit methyltransferase A from Rickettsia felis (strain ATCC VR-1525 / URRWXCal2) (Rickettsia azadi).